A 614-amino-acid polypeptide reads, in one-letter code: Leucine-rich repeat protein soc-2 homolog (614 aa).

Disordered stretches follow at residues 1-29 (MNLCSSAGATASTSSLSSSGHVESNSSGP) and 44-79 (NSGGSGRADTALNQSNRSTVNGGGGNPTNSNGPNLT). LRR repeat units lie at residues 134 to 155 (GIKRLDLSKSSITVLPNTVREC), 157 to 178 (HLTELYLYSNKIGQLPTEIGCL), 180 to 201 (NLRNLALNENSLTSLPESLKHC), 203 to 224 (QLKVLDLRHNKLAEIPSVIYRL), 226 to 247 (SLTTLYLRFNRITAVADDLRQL), 249 to 270 (NLTMLSLRENKIKELGSAIGAL), 272 to 293 (NLTTLDVSHNHLEHLPDDIGNC), 295 to 316 (NLSALDLQHNELLDIPDSIGNL), 318 to 340 (SLVRLGLRYNRLNSVPISLKNCK), 341 to 362 (SMDEFNVEGNGITQLPDGMLAS), 365 to 386 (ALTTITLSRNQFTSYPTGGPAQ), 389 to 410 (NVYSINLEHNRIDKIPYGIFSR), 413 to 434 (GLTKLNMKENMLTALPLDVGTW), 436 to 457 (NMVELNLATNALQKLPDDIMNL), 459 to 480 (NLEILILSNNMLKKIPNTIGNL), 482 to 503 (KLRILDLEENRIEVLPHEIGLL), 505 to 526 (ELQRLILQTNQITMLPRSIGHL), 528 to 549 (NLTHLSVSENNLQFLPEEIGSL), 551 to 573 (SLENLYINQNPGLEKLPFELALC), and 575 to 596 (NLKYLNIDKCPLGTIPPEIQAG).

The protein belongs to the SHOC2 family.

In terms of biological role, acts as a Ras effector and participates in MAPK pathway activation. Probably acts as a regulatory subunit of protein phosphatase that specifically dephosphorylates Raf kinase and stimulate Raf activity at specialized signaling complexes upon Ras activation. In Drosophila virilis (Fruit fly), this protein is Leucine-rich repeat protein soc-2 homolog (Sur-8).